Here is a 316-residue protein sequence, read N- to C-terminus: MASKAKKRAVGNGIQRPLGAPGQREEEEEEEDEVEDEEEDEDDSDEEEDEVDEIVDEEVNIEFEAYSISDNDYGGIKKLLQQLFLKAPVNTAELTNLLMQQNHIGSVIKQTDVSEDSDDEVDEDEIFGFISLLNLTERKGTQCAEQIKELVLSFCEKTCEQSMVEQLDKLLNDTSKPVGLLLSERFINVPPQIALPMHQQLQKELSEARRTNKPCGKCCFYLLISKTFMEAGKSSSRKRQDSLQQGALMFANAEEEFFYEKAILKFSYSVQGESDTRLGGRWSFDDVPMTPLRTVMVIPDDRMNEIMETLKDHLSV.

Residues 1–57 (MASKAKKRAVGNGIQRPLGAPGQREEEEEEEDEVEDEEEDEDDSDEEEDEVDEIVDE) are disordered. A compositionally biased stretch (acidic residues) spans 25–57 (EEEEEEEDEVEDEEEDEDDSDEEEDEVDEIVDE). A phosphoserine mark is found at Ser-44 and Ser-114. Positions 61-169 (IEFEAYSISD…EQSMVEQLDK (109 aa)) are interaction with BRCA2. The interaction with CDKN1A stretch occupies residues 163–261 (MVEQLDKLLN…NAEEEFFYEK (99 aa)). Residue Ser-283 is modified to Phosphoserine.

This sequence belongs to the BCP1 family. As to quaternary structure, interacts with BRCA2, CDKN1A and MTDH/LYRIC. Interacts with DCTN1/p150-glued and ACTR1A/ARP1. Interacts with alpha-, beta- and gamma-tubulins. Interacts with TENT5C; the interaction has no effect on TENT5C poly(A) polymerase function. As to expression, expressed in the testes (at protein level).

Its subcellular location is the nucleus. The protein localises to the cytoplasm. The protein resides in the cytoskeleton. It localises to the microtubule organizing center. It is found in the centrosome. Its subcellular location is the centriole. The protein localises to the spindle pole. Its function is as follows. During interphase, required for microtubule organizing and anchoring activities. During mitosis, required for the organization and stabilization of the spindle pole. May promote cell cycle arrest by enhancing the inhibition of CDK2 activity by CDKN1A. May be required for repair of DNA damage by homologous recombination in conjunction with BRCA2. May not be involved in non-homologous end joining (NHEJ). The chain is BRCA2 and CDKN1A-interacting protein (Bccip) from Mus musculus (Mouse).